The sequence spans 491 residues: Cytochrome P450 2F2 (491 aa).

C436 is a binding site for heme.

It belongs to the cytochrome P450 family. Heme is required as a cofactor. As to expression, club cells in lung and liver.

It localises to the endoplasmic reticulum membrane. The protein resides in the microsome membrane. Involved in the regio- and stereoselective transformation of naphthalene to trans-1R-hydroxy-2R-glutathionyl-1,2-dihydronaphthalene in the presence of glutathione and glutathione S-transferases. It specifically catalyzes the production of a very reactive and potentially toxic intermediate, the 2R,2S arene oxide, that is associated with necrosis of the unciliated bronchiolar epithelial cells or club cells in lung. The sequence is that of Cytochrome P450 2F2 (Cyp2f2) from Mus musculus (Mouse).